We begin with the raw amino-acid sequence, 248 residues long: Mannose-binding protein C (248 aa).

The first 20 residues, 1 to 20 (MSLFPSLTLLLLSVVATSYS), serve as a signal peptide directing secretion. The Collagen-like domain occupies 42–99 (GINGFPGKDGRDGTKGEKGEPGQGLRGLQGPPGKLGPPGNPGSSGSPGPKGQKGDPGE). The disordered stretch occupies residues 43 to 111 (INGFPGKDGR…DCESSLAASE (69 aa)). Pro47 carries the 4-hydroxyproline modification. The segment covering 49–61 (KDGRDGTKGEKGE) has biased composition (basic and acidic residues). Residues Pro73, Pro79, Pro82, and Pro88 each carry the 4-hydroxyproline modification. Positions 82–91 (PGSSGSPGPK) are enriched in low complexity. The stretch at 112-130 (RKALQTEMARIKKWLTFSL) forms a coiled coil. The region spanning 134–245 (VGNKFFLTNG…CSSSHLALCE (112 aa)) is the C-type lectin domain. Intrachain disulfides connect Cys155–Cys244 and Cys222–Cys236.

As to quaternary structure, oligomeric complex of 3 or more homotrimers. Interacts with MASP1 and MASP2. Interacts with MEP1A and MEP1B and may inhibit their catalytic activity. Post-translationally, hydroxylation on proline residues within the sequence motif, GXPG, is most likely to be 4-hydroxy as this fits the requirement for 4-hydroxylation in vertebrates.

The protein localises to the secreted. In terms of biological role, calcium-dependent lectin involved in innate immune defense. Binds mannose, fucose and N-acetylglucosamine on different microorganisms and activates the lectin complement pathway. Binds to late apoptotic cells, as well as to apoptotic blebs and to necrotic cells, but not to early apoptotic cells, facilitating their uptake by macrophages. The protein is Mannose-binding protein C (MBL2) of Macaca fascicularis (Crab-eating macaque).